Reading from the N-terminus, the 391-residue chain is Elongation factor Tu (391 aa).

The 192-residue stretch at 10 to 201 (KPHVNIGTIG…AVDDYIPTPE (192 aa)) folds into the tr-type G domain. Residues 19–26 (GHVDHGKT) form a G1 region. 19–26 (GHVDHGKT) provides a ligand contact to GTP. Threonine 26 contributes to the Mg(2+) binding site. The G2 stretch occupies residues 55–59 (GITIS). Positions 76–79 (DCPG) are G3. Residues 76-80 (DCPGH) and 131-134 (NKVD) each bind GTP. The tract at residues 131–134 (NKVD) is G4. Positions 169 to 171 (SAL) are G5.

It belongs to the TRAFAC class translation factor GTPase superfamily. Classic translation factor GTPase family. EF-Tu/EF-1A subfamily. As to quaternary structure, monomer.

Its subcellular location is the cytoplasm. The catalysed reaction is GTP + H2O = GDP + phosphate + H(+). Its function is as follows. GTP hydrolase that promotes the GTP-dependent binding of aminoacyl-tRNA to the A-site of ribosomes during protein biosynthesis. The polypeptide is Elongation factor Tu (Paracoccus denitrificans (strain Pd 1222)).